A 274-amino-acid chain; its full sequence is TIP41-like protein (274 aa).

Belongs to the TIP41 family.

The polypeptide is TIP41-like protein (tiprl) (Dictyostelium discoideum (Social amoeba)).